A 1057-amino-acid polypeptide reads, in one-letter code: Glycine dehydrogenase (decarboxylating), mitochondrial (1057 aa).

Residues 1–86 constitute a mitochondrion transit peptide; it reads MERARRLANR…GVGYPSQSRS (86 aa). Basic and acidic residues predominate over residues 18–27; sequence SEAKQNRKTE. The tract at residues 18–47 is disordered; it reads SEAKQNRKTESTSTTTTTPLPFSLSGSSSR. Positions 28–47 are enriched in low complexity; it reads STSTTTTTPLPFSLSGSSSR. Lys792 bears the N6-(pyridoxal phosphate)lysine mark.

It belongs to the GcvP family. Homodimer. The glycine cleavage system is composed of four proteins: P, T, L and H. The cofactor is pyridoxal 5'-phosphate. Highly expressed in leaves. Detected in roots and embryos.

Its subcellular location is the mitochondrion. It carries out the reaction N(6)-[(R)-lipoyl]-L-lysyl-[glycine-cleavage complex H protein] + glycine + H(+) = N(6)-[(R)-S(8)-aminomethyldihydrolipoyl]-L-lysyl-[glycine-cleavage complex H protein] + CO2. Functionally, the glycine cleavage system catalyzes the degradation of glycine. The P protein binds the alpha-amino group of glycine through its pyridoxal phosphate cofactor; CO(2) is released and the remaining methylamine moiety is then transferred to the lipoamide cofactor of the H protein. The protein is Glycine dehydrogenase (decarboxylating), mitochondrial (GDCSP) of Pisum sativum (Garden pea).